Reading from the N-terminus, the 410-residue chain is Tyrosine--tRNA ligase (410 aa).

Position 36 (tyrosine 36) interacts with L-tyrosine. The 'HIGH' region motif lies at 41–50 (ATADSLTAGH). L-tyrosine is bound by residues tyrosine 169 and glutamine 173. The 'KMSKS' region motif lies at 229-233 (KMGKT). Lysine 232 provides a ligand contact to ATP. The S4 RNA-binding domain maps to 343–409 (IDLITMMIDA…GKKAYHLFRA (67 aa)).

Belongs to the class-I aminoacyl-tRNA synthetase family. TyrS type 1 subfamily. In terms of assembly, homodimer.

It is found in the cytoplasm. The catalysed reaction is tRNA(Tyr) + L-tyrosine + ATP = L-tyrosyl-tRNA(Tyr) + AMP + diphosphate + H(+). In terms of biological role, catalyzes the attachment of tyrosine to tRNA(Tyr) in a two-step reaction: tyrosine is first activated by ATP to form Tyr-AMP and then transferred to the acceptor end of tRNA(Tyr). The chain is Tyrosine--tRNA ligase from Lachnoclostridium phytofermentans (strain ATCC 700394 / DSM 18823 / ISDg) (Clostridium phytofermentans).